Here is a 228-residue protein sequence, read N- to C-terminus: Ribose-5-phosphate isomerase A (228 aa).

Residues 29–32 (TGST), 85–88 (DGAD), and 98–101 (KGGG) contribute to the substrate site. Catalysis depends on glutamate 107, which acts as the Proton acceptor. Residue lysine 125 coordinates substrate.

Belongs to the ribose 5-phosphate isomerase family. Homodimer.

The enzyme catalyses aldehydo-D-ribose 5-phosphate = D-ribulose 5-phosphate. It participates in carbohydrate degradation; pentose phosphate pathway; D-ribose 5-phosphate from D-ribulose 5-phosphate (non-oxidative stage): step 1/1. Functionally, catalyzes the reversible conversion of ribose-5-phosphate to ribulose 5-phosphate. The sequence is that of Ribose-5-phosphate isomerase A from Staphylococcus aureus (strain COL).